Reading from the N-terminus, the 624-residue chain is MSAIPEEFLSTQAQVDEQAIQPFPNSRKIHVAGSRPDIRVPMREITLSDTHTSQGREKNPPLTVYDTSGPYTDPEAKIDIRQGLSELRRNWIEERADTEILSDLSSQYGRQRNADSKLDSLRFAHLRPPRRAKAGHNVSQMHYARQGIITPEMEFIAIRENQRLEQYREQLAQHHPGQSFGAHLPSRLTPEFVRSEVARGRAIIPANINHTELEPMIIGRNFLVKINANIGNSAVTSSIAEEVDKMTWAIRWGADTVMDLSTGKNIHETREWIVRNSPVPIGTVPIYQALEKVGGKAEELTWEIFRDTLIEQAEQGVDYFTIHAGVRLAYVPLTAKRLTGIVSRGGSIMAKWCLAHHTESFLYTHFEEICEIMKAYDVSFSLGDGLRPGSLADANDAAQFAELETLGELTEIAWKHDVQTMIEGPGHVPMHLIKENMDKQLACCGEAPFYTLGPLTTDIAPGYDHITSGIGAAMIGWYGTAMLCYVTPKEHLGLPNKNDVKEGIITYKIAAHAADLAKGHPSAQIRDNAMSKARFEFRWEDQFNIGLDPDQAREYHDETLPKDSAKVAHFCSMCGPQFCSMKISQDVREYAKQKGLKHHTALEQGMAEKAQEFREKGAEIYHET.

The interval 48 to 70 (SDTHTSQGREKNPPLTVYDTSGP) is disordered. Substrate-binding positions include Asn-229, Met-258, Tyr-287, His-323, 343–345 (SRG), 384–387 (DGLR), and Glu-423. Residue His-427 participates in Zn(2+) binding. Tyr-450 serves as a coordination point for substrate. His-491 contributes to the Zn(2+) binding site. Cys-571, Cys-574, and Cys-579 together coordinate [4Fe-4S] cluster.

The protein belongs to the ThiC family. Homodimer. It depends on [4Fe-4S] cluster as a cofactor.

It catalyses the reaction 5-amino-1-(5-phospho-beta-D-ribosyl)imidazole + S-adenosyl-L-methionine = 4-amino-2-methyl-5-(phosphooxymethyl)pyrimidine + CO + 5'-deoxyadenosine + formate + L-methionine + 3 H(+). Its pathway is cofactor biosynthesis; thiamine diphosphate biosynthesis. Catalyzes the synthesis of the hydroxymethylpyrimidine phosphate (HMP-P) moiety of thiamine from aminoimidazole ribotide (AIR) in a radical S-adenosyl-L-methionine (SAM)-dependent reaction. This Nitrosococcus oceani (strain ATCC 19707 / BCRC 17464 / JCM 30415 / NCIMB 11848 / C-107) protein is Phosphomethylpyrimidine synthase.